The primary structure comprises 130 residues: Small ribosomal subunit protein uS9 (130 aa).

The disordered stretch occupies residues 110 to 130 (AKERKKYGRKGARARFQFSKR). A compositionally biased stretch (basic residues) spans 111-130 (KERKKYGRKGARARFQFSKR).

The protein belongs to the universal ribosomal protein uS9 family.

The sequence is that of Small ribosomal subunit protein uS9 from Syntrophotalea carbinolica (strain DSM 2380 / NBRC 103641 / GraBd1) (Pelobacter carbinolicus).